A 220-amino-acid polypeptide reads, in one-letter code: FMN-dependent NADH:quinone oxidoreductase 1 (220 aa).

An FMN-binding site is contributed by 18–20; that stretch reads SVS.

Belongs to the azoreductase type 1 family. As to quaternary structure, homodimer. FMN is required as a cofactor.

It catalyses the reaction 2 a quinone + NADH + H(+) = 2 a 1,4-benzosemiquinone + NAD(+). The enzyme catalyses N,N-dimethyl-1,4-phenylenediamine + anthranilate + 2 NAD(+) = 2-(4-dimethylaminophenyl)diazenylbenzoate + 2 NADH + 2 H(+). Its function is as follows. Quinone reductase that provides resistance to thiol-specific stress caused by electrophilic quinones. Also exhibits azoreductase activity. Catalyzes the reductive cleavage of the azo bond in aromatic azo compounds to the corresponding amines. The chain is FMN-dependent NADH:quinone oxidoreductase 1 from Bacillus anthracis.